The following is a 962-amino-acid chain: Ubiquitin carboxyl-terminal hydrolase 4 (962 aa).

In terms of domain architecture, DUSP spans 11 to 122 (PDVETQKTEL…GQQPIVRKVV (112 aa)). A necessary for interaction with SART3 region spans residues 27–216 (TLQRGAQWYL…LYQGQVLVIE (190 aa)). Residues 133–141 (VEVYLLELK) carry the Nuclear export signal motif. The Ubiquitin-like 1 domain occupies 142–226 (LCENSDPTNV…PQNEDGTWPR (85 aa)). Positions 220–249 (EDGTWPRQSLQSKSSTAPSRNFTTSSKPSA) are disordered. The segment covering 225 to 249 (PRQSLQSKSSTAPSRNFTTSSKPSA) has biased composition (polar residues). The required for USP4 activation by providing conformational flexibility between the DUSP and catalytic domains stretch occupies residues 229–295 (LQSKSSTAPS…SYNCQEPPSP (67 aa)). Positions 302–922 (CGLGNLGNTC…AAYVLFYQRR (621 aa)) constitute a USP domain. Cysteine 311 acts as the Nucleophile in catalysis. The tract at residues 384 to 386 (PQF) is regulates ubiquitin dissociation. A necessary for interaction with RBL2 region spans residues 405-407 (LHE). At serine 445 the chain carries Phosphoserine. Residues 459 to 463 (LVCPE) are necessary for interaction with RB1 and RBL2. Zn(2+) contacts are provided by cysteine 461 and cysteine 464. Residues 483 to 571 (LKKDRIMEVF…IFVYEVCNTS (89 aa)) enclose the Ubiquitin-like 2 domain. Residues 485 to 774 (KDRIMEVFLV…SQPQKKKKAA (290 aa)) form an interacts with DUSP and ubiquitin-like 1 domains and is required for USP4 activation region. Residues 638–699 (EFLSSPLEPG…SESAQKVKGQ (62 aa)) are disordered. The residue at position 655 (serine 655) is a Phosphoserine. A compositionally biased stretch (acidic residues) spans 657–666 (EGDEEEEMDH). Residues serine 675 and serine 680 each carry the phosphoserine modification. The short motif at 766–771 (QPQKKK) is the Nuclear localization signal element. Zn(2+) contacts are provided by cysteine 798 and cysteine 801. Catalysis depends on histidine 880, which acts as the Proton acceptor. A compositionally biased stretch (low complexity) spans 928-937 (STSSLGSFPG). Residues 928–962 (STSSLGSFPGSDGGVKLSSSHQGMGDEEAYNMDTN) are disordered. The segment covering 952–962 (GDEEAYNMDTN) has biased composition (acidic residues).

This sequence belongs to the peptidase C19 family. USP4 subfamily. In terms of assembly, interacts with RB1 (both dephosphorylated and hypophosphorylated forms). Interacts with RBL1 and RBL2. Interacts with ADORA2A (via cytoplasmic C-terminus); the interaction is direct. Interacts with SART3; recruits USP4 to its substrate PRPF3. Post-translationally, phosphorylated at Ser-445 by PKB/AKT1 in response to EGF stimulus, promoting its ability deubiquitinate RHEB. Monoubiquitinated by TRIM21. Ubiquitination does not lead to its proteasomal degradation. Autodeubiquitinated. As to expression, expressed in brain, kidney, liver and spleen (at protein level).

The protein localises to the cytoplasm. It is found in the nucleus. The catalysed reaction is Thiol-dependent hydrolysis of ester, thioester, amide, peptide and isopeptide bonds formed by the C-terminal Gly of ubiquitin (a 76-residue protein attached to proteins as an intracellular targeting signal).. The completion of the deubiquitinase reaction is mediated by the DUSP and ubiquitin-like 1 domains which promotes the release of ubiquitin from the catalytic site enabling subsequent reactions to occur. Functionally, deubiquitinating enzyme that removes conjugated ubiquitin from target proteins. Deubiquitinates PDPK1. Deubiquitinates TRIM21. Deubiquitinates receptor ADORA2A which increases the amount of functional receptor at the cell surface. Deubiquitinates HAS2. Deubiquitinates RHEB in response to EGF signaling, promoting mTORC1 signaling. May regulate mRNA splicing through deubiquitination of the U4 spliceosomal protein PRPF3. This may prevent its recognition by the U5 component PRPF8 thereby destabilizing interactions within the U4/U6.U5 snRNP. May also play a role in the regulation of quality control in the ER. The polypeptide is Ubiquitin carboxyl-terminal hydrolase 4 (Usp4) (Mus musculus (Mouse)).